Consider the following 308-residue polypeptide: Porphobilinogen deaminase (308 aa).

An S-(dipyrrolylmethanemethyl)cysteine modification is found at C241.

This sequence belongs to the HMBS family. As to quaternary structure, monomer. Dipyrromethane is required as a cofactor.

It catalyses the reaction 4 porphobilinogen + H2O = hydroxymethylbilane + 4 NH4(+). Its pathway is porphyrin-containing compound metabolism; protoporphyrin-IX biosynthesis; coproporphyrinogen-III from 5-aminolevulinate: step 2/4. Functionally, tetrapolymerization of the monopyrrole PBG into the hydroxymethylbilane pre-uroporphyrinogen in several discrete steps. This Staphylococcus aureus (strain MRSA252) protein is Porphobilinogen deaminase.